The sequence spans 183 residues: 2-C-methyl-D-erythritol 2,4-cyclodiphosphate synthase (183 aa).

Asp-10 and His-12 together coordinate a divalent metal cation. Residues 10 to 12 (DVH) and 38 to 39 (HS) each bind 4-CDP-2-C-methyl-D-erythritol 2-phosphate. An a divalent metal cation-binding site is contributed by His-46. Residues 60–62 (DIG) and 65–69 (FPDTD) contribute to the 4-CDP-2-C-methyl-D-erythritol 2-phosphate site.

The protein belongs to the IspF family. Homotrimer. The cofactor is a divalent metal cation.

It catalyses the reaction 4-CDP-2-C-methyl-D-erythritol 2-phosphate = 2-C-methyl-D-erythritol 2,4-cyclic diphosphate + CMP. Its pathway is isoprenoid biosynthesis; isopentenyl diphosphate biosynthesis via DXP pathway; isopentenyl diphosphate from 1-deoxy-D-xylulose 5-phosphate: step 4/6. Functionally, involved in the biosynthesis of isopentenyl diphosphate (IPP) and dimethylallyl diphosphate (DMAPP), two major building blocks of isoprenoid compounds. Catalyzes the conversion of 4-diphosphocytidyl-2-C-methyl-D-erythritol 2-phosphate (CDP-ME2P) to 2-C-methyl-D-erythritol 2,4-cyclodiphosphate (ME-CPP) with a corresponding release of cytidine 5-monophosphate (CMP). In Verminephrobacter eiseniae (strain EF01-2), this protein is 2-C-methyl-D-erythritol 2,4-cyclodiphosphate synthase.